Reading from the N-terminus, the 610-residue chain is Modifier of mdg4 (610 aa).

The self-association stretch occupies residues 1–160 (MADDEQFSLC…QQPRASARYK (160 aa)). An interaction with Chi region spans residues 1 to 308 (MADDEQFSLC…EEAEYIDLPM (308 aa)). Residues 32–98 (VDVSLAAEGQ…MYCGEVNVKQ (67 aa)) enclose the BTB domain. Disordered regions lie at residues 115-156 (GLTD…PRAS), 219-259 (VSTN…DSTT), 311-339 (PTKSEPDYSEDHGDAAGDAEGTYVEDDTY), and 386-432 (ESSF…PKPK). Residues 122 to 135 (APQPPQESSPPPAA) are compositionally biased toward pro residues. Over residues 136–156 (PHVQQQQIPAQRVQRQQPRAS) the composition is skewed to low complexity. The span at 222-238 (NKRSAQRSSLTPASSSA) shows a compositional bias: polar residues. Ser230 carries the post-translational modification Phosphoserine. Over residues 312–325 (TKSEPDYSEDHGDA) the composition is skewed to basic and acidic residues. The span at 386-400 (ESSFVDTSGDQGNTE) shows a compositional bias: polar residues. A compositionally biased stretch (low complexity) spans 401-410 (AQAATSASAT). Positions 422–432 (TKVEDQTPKPK) are enriched in basic and acidic residues. The FLYWCH-type zinc finger occupies 452 to 512 (YASTTKGGVK…VFPYEGEHVH (61 aa)). Residues 551-610 (LEEADDKEDEDFEEFEIQEIDEIELDEPEKTPAKEEEVDPNDFREKIKRRLQKALQNKKK) form an interaction with su(Hw) region. Acidic residues predominate over residues 567-577 (IQEIDEIELDE). The interval 567 to 595 (IQEIDEIELDEPEKTPAKEEEVDPNDFRE) is disordered. The span at 578–595 (PEKTPAKEEEVDPNDFRE) shows a compositional bias: basic and acidic residues.

Can self-associate. Interacts with Chi. Interacts with Top2. Isoform mod2.2: Component of the gypsy chromatin insulator complex, composed of Cp190, mod(mdg4) and su(Hw). The gypsy chromatin insulator complex interacts with Topors via mod(mdg4) and su(Hw). Isoform mod2.2 interacts with Trl/GAGA and interaction with this protein may bypass the repressive effects of the su(Hw) insulator.

Its subcellular location is the nucleus. It is found in the chromosome. In terms of biological role, component of the gypsy chromatin insulator complex which is required for the function of the gypsy chromatin insulator and other endogenous chromatin insulators. Chromatin insulators are regulatory elements which establish independent domains of transcriptional activity within eukaryotic genomes. Insulators have two defining properties; they can block the communication between an enhancer and a promoter when placed between them and can also buffer transgenes from position effect variegation (PEV). Insulators are proposed to structure the chromatin fiber into independent domains of differing transcriptional potential by promoting the formation of distinct chromatin loops. This chromatin looping may involve the formation of insulator bodies, where homotypic interactions between individual subunits of the insulator complex could promote the clustering of widely spaced insulators at the nuclear periphery. Within the gypsy insulator complex, this protein may control the nature of the repressive effect of su(Hw): in the absence of mod(mdg4) protein, su(Hw) exerts a bidirectional silencing effect, whereas in the presence of mod(mdg4), the silencing effect is unidirectional. Isoform H is specifically required to maintain the pairing of achiasmate homologs in male meiosis I which is mediated by the rDNA repeats on the achiasmate X-Y bivalents. Isoform H also plays a role in apoptotic regulatory pathways. This chain is Modifier of mdg4, found in Drosophila melanogaster (Fruit fly).